The following is a 192-amino-acid chain: FMN-dependent NADH:quinone oxidoreductase 1 (192 aa).

FMN is bound by residues Ser-9 and Ser-15 to Ser-17.

Belongs to the azoreductase type 1 family. In terms of assembly, homodimer. FMN is required as a cofactor.

It carries out the reaction 2 a quinone + NADH + H(+) = 2 a 1,4-benzosemiquinone + NAD(+). The enzyme catalyses N,N-dimethyl-1,4-phenylenediamine + anthranilate + 2 NAD(+) = 2-(4-dimethylaminophenyl)diazenylbenzoate + 2 NADH + 2 H(+). In terms of biological role, quinone reductase that provides resistance to thiol-specific stress caused by electrophilic quinones. Functionally, also exhibits azoreductase activity. Catalyzes the reductive cleavage of the azo bond in aromatic azo compounds to the corresponding amines. This chain is FMN-dependent NADH:quinone oxidoreductase 1, found in Colwellia psychrerythraea (strain 34H / ATCC BAA-681) (Vibrio psychroerythus).